A 301-amino-acid chain; its full sequence is Cilia- and flagella-associated protein 161 (301 aa).

Residues 269 to 301 (GNPRDASSSMLDLPKPPTEDTRAMEQAMGLDTQ) form a disordered region.

Microtubule inner protein component of sperm flagellar doublet microtubules. Expressed in airway epithelial cells.

It localises to the cytoplasm. Its subcellular location is the cytoskeleton. The protein resides in the cilium axoneme. It is found in the flagellum axoneme. Microtubule inner protein (MIP) part of the dynein-decorated doublet microtubules (DMTs) in cilia axoneme, which is required for motile cilia beating. In Homo sapiens (Human), this protein is Cilia- and flagella-associated protein 161.